Consider the following 533-residue polypeptide: Probable galacturonosyltransferase 13 (533 aa).

Residues 1–40 (MQLHISPSMRSITISSSNEFIDLMKIKVAARHISYRTLFH) lie on the Cytoplasmic side of the membrane. The chain crosses the membrane as a helical; Signal-anchor for type II membrane protein span at residues 41–61 (TILILAFLLPFVFILTAVVTL). Topologically, residues 62 to 533 (EGVNKCSSFD…DFIKNCHILE (472 aa)) are lumenal. 4 N-linked (GlcNAc...) asparagine glycosylation sites follow: Asn-306, Asn-396, Asn-445, and Asn-520.

This sequence belongs to the glycosyltransferase 8 family. As to expression, expressed in roots, inflorescences, siliques, leaves and stems. Accumulates in pollen grains.

The protein resides in the golgi apparatus membrane. Its pathway is glycan metabolism; pectin biosynthesis. Functionally, may be involved in pectin and/or xylans biosynthesis in cell walls. Together with GAUT14, required for pollen tube growth, possibly through the regulation of pectin biosynthesis and repartition in the pollen tube wall. This chain is Probable galacturonosyltransferase 13, found in Arabidopsis thaliana (Mouse-ear cress).